A 431-amino-acid chain; its full sequence is Bifunctional protein GlmU (431 aa).

The interval 1–223 (MNLSIVILAA…EENFKGVNSK (223 aa)) is pyrophosphorylase. Residues 8–11 (LAAG), Lys22, Gln74, and 81–82 (GT) each bind UDP-N-acetyl-alpha-D-glucosamine. Residue Asp102 participates in Mg(2+) binding. Residues Gly135, Glu149, Asn164, and Asn221 each coordinate UDP-N-acetyl-alpha-D-glucosamine. Asn221 is a Mg(2+) binding site. The interval 224–244 (ADLAEAEAIMTGRIRRRWMRE) is linker. Residues 245-431 (GVRMRLPETI…FFARYFSSSK (187 aa)) form an N-acetyltransferase region. UDP-N-acetyl-alpha-D-glucosamine contacts are provided by Arg308 and Lys325. Residue His336 is the Proton acceptor of the active site. UDP-N-acetyl-alpha-D-glucosamine contacts are provided by Tyr339 and Asn350. Acetyl-CoA contacts are provided by residues Ala353, 359–360 (NY), Ser378, Ala396, and Arg413.

In the N-terminal section; belongs to the N-acetylglucosamine-1-phosphate uridyltransferase family. This sequence in the C-terminal section; belongs to the transferase hexapeptide repeat family. As to quaternary structure, homotrimer. Requires Mg(2+) as cofactor.

The protein resides in the cytoplasm. It catalyses the reaction alpha-D-glucosamine 1-phosphate + acetyl-CoA = N-acetyl-alpha-D-glucosamine 1-phosphate + CoA + H(+). The catalysed reaction is N-acetyl-alpha-D-glucosamine 1-phosphate + UTP + H(+) = UDP-N-acetyl-alpha-D-glucosamine + diphosphate. The protein operates within nucleotide-sugar biosynthesis; UDP-N-acetyl-alpha-D-glucosamine biosynthesis; N-acetyl-alpha-D-glucosamine 1-phosphate from alpha-D-glucosamine 6-phosphate (route II): step 2/2. It functions in the pathway nucleotide-sugar biosynthesis; UDP-N-acetyl-alpha-D-glucosamine biosynthesis; UDP-N-acetyl-alpha-D-glucosamine from N-acetyl-alpha-D-glucosamine 1-phosphate: step 1/1. It participates in bacterial outer membrane biogenesis; LPS lipid A biosynthesis. Functionally, catalyzes the last two sequential reactions in the de novo biosynthetic pathway for UDP-N-acetylglucosamine (UDP-GlcNAc). The C-terminal domain catalyzes the transfer of acetyl group from acetyl coenzyme A to glucosamine-1-phosphate (GlcN-1-P) to produce N-acetylglucosamine-1-phosphate (GlcNAc-1-P), which is converted into UDP-GlcNAc by the transfer of uridine 5-monophosphate (from uridine 5-triphosphate), a reaction catalyzed by the N-terminal domain. The polypeptide is Bifunctional protein GlmU (Wolinella succinogenes (strain ATCC 29543 / DSM 1740 / CCUG 13145 / JCM 31913 / LMG 7466 / NCTC 11488 / FDC 602W) (Vibrio succinogenes)).